Reading from the N-terminus, the 452-residue chain is Xaa-Pro dipeptidase 1 (452 aa).

Residues Asp-247, Asp-258, His-338, Glu-383, and Glu-422 each contribute to the Mn(2+) site.

It belongs to the peptidase M24B family. Bacterial-type prolidase subfamily. Mn(2+) serves as cofactor.

It catalyses the reaction Xaa-L-Pro dipeptide + H2O = an L-alpha-amino acid + L-proline. Functionally, splits dipeptides with a prolyl residue in the C-terminal position. In Idiomarina loihiensis (strain ATCC BAA-735 / DSM 15497 / L2-TR), this protein is Xaa-Pro dipeptidase 1.